Consider the following 386-residue polypeptide: S-adenosylmethionine synthase (386 aa).

Histidine 16 contributes to the ATP binding site. A Mg(2+)-binding site is contributed by aspartate 18. Residue glutamate 44 coordinates K(+). Glutamate 57 and glutamine 100 together coordinate L-methionine. Residues 100–110 (QSPDINQGVDR) are flexible loop. ATP-binding positions include 164–166 (DGK), 230–231 (KF), aspartate 239, 245–246 (RK), alanine 262, and lysine 266. Aspartate 239 is an L-methionine binding site. Lysine 270 is a binding site for L-methionine.

This sequence belongs to the AdoMet synthase family. As to quaternary structure, homotetramer; dimer of dimers. Requires Mg(2+) as cofactor. K(+) is required as a cofactor.

It is found in the cytoplasm. The catalysed reaction is L-methionine + ATP + H2O = S-adenosyl-L-methionine + phosphate + diphosphate. Its pathway is amino-acid biosynthesis; S-adenosyl-L-methionine biosynthesis; S-adenosyl-L-methionine from L-methionine: step 1/1. In terms of biological role, catalyzes the formation of S-adenosylmethionine (AdoMet) from methionine and ATP. The overall synthetic reaction is composed of two sequential steps, AdoMet formation and the subsequent tripolyphosphate hydrolysis which occurs prior to release of AdoMet from the enzyme. The protein is S-adenosylmethionine synthase of Helicobacter hepaticus (strain ATCC 51449 / 3B1).